Here is a 447-residue protein sequence, read N- to C-terminus: Tubulin beta-2 chain (447 aa).

Positions 11, 69, 138, 142, 143, 144, 204, and 226 each coordinate GTP. Residue Glu69 coordinates Mg(2+). The segment at Gln426 to Val447 is disordered. Residues Gly429–Val447 are compositionally biased toward acidic residues.

It belongs to the tubulin family. Dimer of alpha and beta chains. A typical microtubule is a hollow water-filled tube with an outer diameter of 25 nm and an inner diameter of 15 nM. Alpha-beta heterodimers associate head-to-tail to form protofilaments running lengthwise along the microtubule wall with the beta-tubulin subunit facing the microtubule plus end conferring a structural polarity. Microtubules usually have 13 protofilaments but different protofilament numbers can be found in some organisms and specialized cells. Requires Mg(2+) as cofactor.

It localises to the cytoplasm. It is found in the cytoskeleton. In terms of biological role, tubulin is the major constituent of microtubules, a cylinder consisting of laterally associated linear protofilaments composed of alpha- and beta-tubulin heterodimers. Microtubules grow by the addition of GTP-tubulin dimers to the microtubule end, where a stabilizing cap forms. Below the cap, tubulin dimers are in GDP-bound state, owing to GTPase activity of alpha-tubulin. The protein is Tubulin beta-2 chain (TUB2) of Colletotrichum gloeosporioides (Anthracnose fungus).